The primary structure comprises 205 residues: Urease accessory protein UreG (205 aa).

Residue 14–21 coordinates GTP; that stretch reads GPVGSGKT.

Belongs to the SIMIBI class G3E GTPase family. UreG subfamily. In terms of assembly, homodimer. UreD, UreF and UreG form a complex that acts as a GTP-hydrolysis-dependent molecular chaperone, activating the urease apoprotein by helping to assemble the nickel containing metallocenter of UreC. The UreE protein probably delivers the nickel.

Its subcellular location is the cytoplasm. Its function is as follows. Facilitates the functional incorporation of the urease nickel metallocenter. This process requires GTP hydrolysis, probably effectuated by UreG. In Enterobacter sp. (strain 638), this protein is Urease accessory protein UreG.